We begin with the raw amino-acid sequence, 391 residues long: Histamine H4 receptor (391 aa).

Residues 1–19 are Extracellular-facing; it reads MSESNSTGILPPAAQVPLA. A glycan (N-linked (GlcNAc...) asparagine) is linked at N5. Residues 20 to 40 form a helical membrane-spanning segment; sequence FLMSSFAFAIMVGNAVVILAF. Residues 41-52 lie on the Cytoplasmic side of the membrane; the sequence is VVDRNLRHRSNY. The helical transmembrane segment at 53–73 threads the bilayer; it reads FFLNLAISDFLVGLISIPLYI. Topologically, residues 74–87 are extracellular; that stretch reads PHVLFNWNFGSGIC. The cysteines at positions 87 and 166 are disulfide-linked. The helical transmembrane segment at 88–108 threads the bilayer; it reads MFWLITDYLLCTASVYNIVLI. Residues 109–131 are Cytoplasmic-facing; that stretch reads SYDRYQSVSNAVSYRAQHTGIMK. Residues 132–152 form a helical membrane-spanning segment; the sequence is IVAQMVAVWILAFLVNGPMIL. Residues 153-174 lie on the Extracellular side of the membrane; it reads ASDSWKNSTNTKDCEPGFVTEW. N159 carries an N-linked (GlcNAc...) asparagine glycan. Residues 175-195 form a helical membrane-spanning segment; sequence YILTITMLLEFLLPVISVAYF. Over 196–306 the chain is Cytoplasmic; that stretch reads NVQIYWSLWK…LLRGRKLARS (111 aa). Positions 238–258 are disordered; the sequence is TSNPGLKESAASRHSESPRRK. The segment covering 247-256 has biased composition (basic and acidic residues); the sequence is AASRHSESPR. A helical transmembrane segment spans residues 307–327; sequence LAILLSAFAICWAPYCLFTIV. The Extracellular portion of the chain corresponds to 328 to 343; it reads LSTYPRTERPKSVWYS. The helical transmembrane segment at 344 to 364 threads the bilayer; the sequence is IAFWLQWFNSFVNPFLYPLCH. Residues 365 to 391 are Cytoplasmic-facing; it reads RRFQKAFWKILCVTKQPALSQNQSVSS.

This sequence belongs to the G-protein coupled receptor 1 family. As to quaternary structure, interacts with TSPAN4.

The protein localises to the cell membrane. Functionally, the H4 subclass of histamine receptors could mediate the histamine signals in peripheral tissues. Displays a significant level of constitutive activity (spontaneous activity in the absence of agonist). The sequence is that of Histamine H4 receptor (Hrh4) from Mus musculus (Mouse).